Reading from the N-terminus, the 82-residue chain is UPF0213 protein SERP0126 (82 aa).

The region spanning 2–77 (DKHFVYIVKC…KTYTRQQKLK (76 aa)) is the GIY-YIG domain.

The protein belongs to the UPF0213 family.

This is UPF0213 protein SERP0126 from Staphylococcus epidermidis (strain ATCC 35984 / DSM 28319 / BCRC 17069 / CCUG 31568 / BM 3577 / RP62A).